The primary structure comprises 4678 residues: E3 ubiquitin-protein ligase MYCBP2 (4678 aa).

Disordered regions lie at residues 87 to 127, 172 to 192, and 609 to 628; these read DRDQ…RSKS, SKNSVQSGESDSDEEEESKEP, and ASKGEDGESTKSRRQSKPYK. Residues 100-124 show a composition bias toward basic residues; that stretch reads SRNKKILNKKKLKRKQKSKSKVKTR. Ser127, Ser178, Ser181, and Ser183 each carry phosphoserine. RCC1 repeat units follow at residues 600 to 655, 699 to 755, 907 to 957, 958 to 1008, and 1010 to 1066; these read DGSI…VISK, NGEV…MMCP, KRDK…VLME, NGDV…VLLM, and GQVF…LRID. Residues 898 to 910 are compositionally biased toward basic residues; it reads RSHPAQLKHKRDK. Residues 898–928 are disordered; that stretch reads RSHPAQLKHKRDKHKDGSGERGEKDASKITT. Basic and acidic residues predominate over residues 911–924; sequence HKDGSGERGEKDAS. Residues 1235–1386 are PHR domain 1; that stretch reads NRFESHGGGW…GQIPQLLYRL (152 aa). The residue at position 1624 (Ser1624) is a Phosphoserine. The tract at residues 1726–1884 is PHR domain 2; sequence NRFTKTSQGR…GQIPQILYYR (159 aa). Cys1748 and Cys1863 are oxidised to a cystine. Disordered regions lie at residues 1993–2012 and 2321–2340; these read FNPNQSTDSTTGNQPEQGLS and QQDQAKKPQRIPGSPAVTAA. Positions 1994–2012 are enriched in polar residues; the sequence is NPNQSTDSTTGNQPEQGLS. The interval 2022 to 2550 is RAE1 binding; that stretch reads VIESEHPYKP…NQHLGKSLLV (529 aa). One copy of the Filamin repeat lies at 2341-2443; sequence SSNTDMTYGG…IDAGLEVKVK (103 aa). Thr2683 is subject to Phosphothreonine. 4 disordered regions span residues 2709-2931, 2943-2963, 2979-3020, and 3066-3085; these read LGNS…LHSE, TNSLTDSTCDDSSEFKSVDEG, EQEM…EPAK, and APIRSSLNSQQPTEEKETKL. Polar residues predominate over residues 2718-2733; the sequence is NISTSSKPASTSGKSE. Basic and acidic residues predominate over residues 2742–2760; sequence LKPDGRMSRTTADQKKPRG. At Ser2769 the chain carries Phosphoserine. A compositionally biased stretch (basic and acidic residues) spans 2775–2785; it reads DAAKLRSDSHS. The segment covering 2786 to 2810 has biased composition (polar residues); sequence RSLSPNHNTLQTLKSDGRMPSSSRA. Residues Ser2787, Ser2789, Ser2833, Ser2839, Ser2869, Ser2871, and Ser2920 each carry the phosphoserine modification. A compositionally biased stretch (low complexity) spans 2828–2843; it reads PANRSSPSGASSPRSS. Positions 2860 to 2871 are enriched in basic and acidic residues; the sequence is TKLDPPRERSKS. Ser2985 carries the post-translational modification Phosphoserine. Residues 2988–3001 are compositionally biased toward basic residues; it reads ISRKCANRHTRPKK. Phosphoserine occurs at positions 3090, 3478, and 3505. Positions 3605–3631 are disordered; that stretch reads PVEPEEEEDEENKTSKENSEQEKDTRV. The span at 3616–3631 shows a compositional bias: basic and acidic residues; the sequence is NKTSKENSEQEKDTRV. Residues 3719–3897 enclose the DOC domain; the sequence is SISIQSGFEA…VAQQRNCEAE (179 aa). The tract at residues 3915 to 3934 is disordered; it reads SGDAEPTPEQEEKALLSSPE. The residue at position 3921 (Thr3921) is a Phosphothreonine. Phosphoserine is present on residues Ser3931 and Ser3932. Residues Cys4428, Cys4431, Cys4446, His4448, His4451, Cys4454, Cys4475, Cys4478, Cys4544, and Cys4547 each contribute to the Zn(2+) site. Residues 4428-4479 form an RING-type; atypical zinc finger; the sequence is CMICFTEALSAAPAIQLDCSHIFHLQCCRRVLENRWLGPRITFGFISCPICK. The segment at 4539–4676 is tandem cysteine domain; that stretch reads YAYYVCYKCR…LGCGVCRNAH (138 aa). Cys4558 is an active-site residue. Cys4575, Cys4578, Cys4587, His4590, Cys4599, Cys4602, and Cys4603 together coordinate Zn(2+). The active site involves Cys4610. 7 residues coordinate Zn(2+): Cys4617, Cys4620, Cys4638, Cys4652, His4658, Cys4669, and Cys4672.

This sequence belongs to the RING-Cys relay (RCR) family. Interacts with MYC. Interacts with TSC2 (tuberin) when TSC2 is in complex with TSC1 (hamartin). Interacts with FBXO45. Interacts with RAE1. Interacts with CPNE1 (via VWFA domain) and CPNE4 (via VWFA domain). Interacts with (sumoylated) RANGAP1; interaction with sumoylated RANGAP1 inhibits E3 ubiquitin-protein ligase activity and promotes MYCBP2 translocation to the nucleus. Interacts with RAN. Interacts with ATP13A2; the interaction inhibits the ubiquitination of TSC2 by MYCBP2. Interacts with USP11. Autoubiquitinated. In terms of tissue distribution, expressed in all tissues examined, expression is exceptionally abundant in brain and thymus. Colocalizes with TSC1 and TSC2 along the neurites and in the growth cones. Highly expressed in peripheral and central neurons. Colocalized with TSC1 in one of the filopodial extensions at the tip of a growth cone.

Its subcellular location is the nucleus. The protein resides in the cell projection. It localises to the axon. It is found in the cytoplasm. The protein localises to the cytoskeleton. It carries out the reaction [E2 ubiquitin-conjugating enzyme]-S-ubiquitinyl-L-cysteine + [acceptor protein]-L-threonine = [E2 ubiquitin-conjugating enzyme]-L-cysteine + [acceptor protein]-3-O-ubiquitinyl-L-threonine.. Its pathway is protein modification; protein ubiquitination. Functionally, atypical E3 ubiquitin-protein ligase which specifically mediates ubiquitination of threonine and serine residues on target proteins, instead of ubiquitinating lysine residues. Shows esterification activity towards both threonine and serine, with a preference for threonine, and acts via two essential catalytic cysteine residues that relay ubiquitin to its substrate via thioester intermediates. Interacts with the E2 enzymes UBE2D1, UBE2D3, UBE2E1 and UBE2L3. Plays a key role in neural development, probably by mediating ubiquitination of threonine residues on target proteins. Involved in different processes such as regulation of neurite outgrowth, synaptic growth, synaptogenesis and axon degeneration. Required for the formation of major central nervous system axon tracts. Required for proper axon growth by regulating axon navigation and axon branching: acts by regulating the subcellular location and stability of MAP3K12/DLK. Required for proper localization of retinogeniculate projections but not for eye-specific segregation. Regulates axon guidance in the olfactory system. Involved in Wallerian axon degeneration, an evolutionarily conserved process that drives the loss of damaged axons: acts by promoting destabilization of NMNAT2, probably via ubiquitination of NMNAT2. Catalyzes ubiquitination of threonine and/or serine residues on NMNAT2, consequences of threonine and/or serine ubiquitination are however unknown. Regulates the internalization of TRPV1 in peripheral sensory neurons. Mediates ubiquitination and subsequent proteasomal degradation of TSC2/tuberin. Independently of the E3 ubiquitin-protein ligase activity, also acts as a guanosine exchange factor (GEF) for RAN in neurons of dorsal root ganglia. May function as a facilitator or regulator of transcriptional activation by MYC. Acts in concert with HUWE1 to regulate the circadian clock gene expression by promoting the lithium-induced ubiquination and degradation of NR1D1. The protein is E3 ubiquitin-protein ligase MYCBP2 of Homo sapiens (Human).